The following is a 243-amino-acid chain: Triosephosphate isomerase (243 aa).

Residue 9–11 (NWK) participates in substrate binding. Residue His-96 is the Electrophile of the active site. The Proton acceptor role is filled by Glu-165. Substrate-binding positions include Gly-171, Ser-204, and 225–226 (GG).

This sequence belongs to the triosephosphate isomerase family. In terms of assembly, homodimer.

It localises to the cytoplasm. The catalysed reaction is D-glyceraldehyde 3-phosphate = dihydroxyacetone phosphate. It functions in the pathway carbohydrate biosynthesis; gluconeogenesis. The protein operates within carbohydrate degradation; glycolysis; D-glyceraldehyde 3-phosphate from glycerone phosphate: step 1/1. In terms of biological role, involved in the gluconeogenesis. Catalyzes stereospecifically the conversion of dihydroxyacetone phosphate (DHAP) to D-glyceraldehyde-3-phosphate (G3P). This Nostoc punctiforme (strain ATCC 29133 / PCC 73102) protein is Triosephosphate isomerase.